Reading from the N-terminus, the 89-residue chain is Dynein light chain 1, cytoplasmic (89 aa).

The protein belongs to the dynein light chain family. Interacts with mett-10; the interaction is direct, and is required for the nuclear localization of mett-10. Component of a dynein-regulating complex composed of at least bicd-1, dlc-1 and egal-1. Interacts with egal-1 and unc-83. Interacts with fbf-2. In terms of tissue distribution, broadly expressed in tissues including the intestine, body wall muscles, germs cells, oocytes, the rectal valve and cells in the head.

Its subcellular location is the cytoplasm. The protein resides in the cytoskeleton. The protein localises to the nucleus envelope. It localises to the cytoplasmic granule. Acts as a non-catalytic accessory component of a dynein complex. Part of a complex with bicd-1 and egal-1, which is recruited to the nuclear envelope by unc-83, where in turn, it recruits dynein to the nuclear surface and regulates nuclear migrations in hypodermal precursor cells. Probably within a dynein motor complex, plays a role in the cell fate specification of the germline and oogenesis. In particular, it inhibits germ cell proliferation. Regulates the function and localization of the RNA-binding protein fbf-2 in the germline. Plays a role in mitotic and meiotic processes. Involved in the pairing of homologous chromosomes. Independently of its dynein-mediated functions, plays a role in germ cell apoptosis. The protein is Dynein light chain 1, cytoplasmic of Caenorhabditis elegans.